Here is a 424-residue protein sequence, read N- to C-terminus: Serine--tRNA ligase (424 aa).

231–233 (TAE) serves as a coordination point for L-serine. An ATP-binding site is contributed by 262–264 (RSE). L-serine is bound at residue Glu-285. Position 349–352 (349–352 (EISS)) interacts with ATP. Ser-385 contributes to the L-serine binding site.

Belongs to the class-II aminoacyl-tRNA synthetase family. Type-1 seryl-tRNA synthetase subfamily. Homodimer. The tRNA molecule binds across the dimer.

The protein localises to the cytoplasm. The catalysed reaction is tRNA(Ser) + L-serine + ATP = L-seryl-tRNA(Ser) + AMP + diphosphate + H(+). It catalyses the reaction tRNA(Sec) + L-serine + ATP = L-seryl-tRNA(Sec) + AMP + diphosphate + H(+). The protein operates within aminoacyl-tRNA biosynthesis; selenocysteinyl-tRNA(Sec) biosynthesis; L-seryl-tRNA(Sec) from L-serine and tRNA(Sec): step 1/1. Functionally, catalyzes the attachment of serine to tRNA(Ser). Is also able to aminoacylate tRNA(Sec) with serine, to form the misacylated tRNA L-seryl-tRNA(Sec), which will be further converted into selenocysteinyl-tRNA(Sec). The sequence is that of Serine--tRNA ligase from Bacillus cereus (strain G9842).